We begin with the raw amino-acid sequence, 770 residues long: Low-density lipoprotein receptor-related protein 3 (770 aa).

Residues 1–36 (MEKRAAAGPEGAPGARAPLAVVCLVNLFLTGRLSSA) form the signal peptide. Topologically, residues 37 to 496 (VPALAACSGK…HGCLAAVPRK (460 aa)) are extracellular. Disulfide bonds link Cys43-Cys72, Cys99-Cys120, Cys166-Cys178, Cys173-Cys191, Cys185-Cys200, Cys212-Cys227, Cys219-Cys240, Cys234-Cys249, and Cys254-Cys282. Residues 43–159 (CSGKLEQHTE…QGFRLSYIRG (117 aa)) enclose the CUB 1 domain. Residue Asn71 is glycosylated (N-linked (GlcNAc...) asparagine). LDL-receptor class A domains follow at residues 165 to 201 (SCQTDEFRCDNGKCLPGPWQCNMVDECGDGSDEGNCS) and 211 to 250 (LCPGGTFPCSGARSTRCLPVERRCDGTQDCGDGSDEAGCP). Residue Asn199 is glycosylated (N-linked (GlcNAc...) asparagine). The CUB 2 domain occupies 254 to 365 (CGRRLGSFYG…HGFNATYQVK (112 aa)). N-linked (GlcNAc...) asparagine glycosylation occurs at Asn359. LDL-receptor class A domains lie at 415–453 (ACPPDQYPCEGGSGLCYAPADRCNNQKSCPDGADEKNCF) and 454–490 (SCQPGTFHCGTNLCIFETWRCDGQEDCQDGSDEHGCL). Intrachain disulfides connect Cys416/Cys430, Cys423/Cys443, Cys437/Cys452, Cys455/Cys467, Cys462/Cys480, and Cys474/Cys489. The chain crosses the membrane as a helical span at residues 497 to 517 (VITAALIGSLVCGLLLVIALG). The Cytoplasmic segment spans residues 518–770 (CAFKLYSLRT…ASDDEALLVC (253 aa)). Residues 639-753 (LLQAAPGPVP…PLGVCRSPPP (115 aa)) form a disordered region. Basic and acidic residues predominate over residues 689–703 (RDPEYRPEDKERKAC).

The protein belongs to the LDLR family. Binds GGA1 and GGA2.

It localises to the membrane. Its subcellular location is the coated pit. Probable receptor, which may be involved in the internalization of lipophilic molecules and/or signal transduction. Its precise role is however unclear, since it does not bind to very low density lipoprotein (VLDL) or to LRPAP1 in vitro. The chain is Low-density lipoprotein receptor-related protein 3 (Lrp3) from Rattus norvegicus (Rat).